A 420-amino-acid chain; its full sequence is Glucose-1-phosphate adenylyltransferase (420 aa).

Residues tyrosine 107, glycine 172, 187–188 (EK), and serine 205 each bind alpha-D-glucose 1-phosphate.

It belongs to the bacterial/plant glucose-1-phosphate adenylyltransferase family. As to quaternary structure, homotetramer.

It catalyses the reaction alpha-D-glucose 1-phosphate + ATP + H(+) = ADP-alpha-D-glucose + diphosphate. Its pathway is glycan biosynthesis; glycogen biosynthesis. Involved in the biosynthesis of ADP-glucose, a building block required for the elongation reactions to produce glycogen. Catalyzes the reaction between ATP and alpha-D-glucose 1-phosphate (G1P) to produce pyrophosphate and ADP-Glc. This is Glucose-1-phosphate adenylyltransferase from Rhodopseudomonas palustris (strain TIE-1).